Reading from the N-terminus, the 937-residue chain is Bifunctional glutamine synthetase adenylyltransferase/adenylyl-removing enzyme (937 aa).

The tract at residues 1 to 436 (MSQPIPSASP…AAEFAELLAP (436 aa)) is adenylyl removase. The tract at residues 443–937 (PDTLADYWRA…QLRFQPGKGA (495 aa)) is adenylyl transferase.

The protein belongs to the GlnE family. It depends on Mg(2+) as a cofactor.

It carries out the reaction [glutamine synthetase]-O(4)-(5'-adenylyl)-L-tyrosine + phosphate = [glutamine synthetase]-L-tyrosine + ADP. The enzyme catalyses [glutamine synthetase]-L-tyrosine + ATP = [glutamine synthetase]-O(4)-(5'-adenylyl)-L-tyrosine + diphosphate. Involved in the regulation of glutamine synthetase GlnA, a key enzyme in the process to assimilate ammonia. When cellular nitrogen levels are high, the C-terminal adenylyl transferase (AT) inactivates GlnA by covalent transfer of an adenylyl group from ATP to specific tyrosine residue of GlnA, thus reducing its activity. Conversely, when nitrogen levels are low, the N-terminal adenylyl removase (AR) activates GlnA by removing the adenylyl group by phosphorolysis, increasing its activity. The regulatory region of GlnE binds the signal transduction protein PII (GlnB) which indicates the nitrogen status of the cell. This Xanthomonas campestris pv. campestris (strain B100) protein is Bifunctional glutamine synthetase adenylyltransferase/adenylyl-removing enzyme.